Reading from the N-terminus, the 125-residue chain is Lymphocyte antigen 6 complex locus protein G6c (125 aa).

Positions Met1–Ala18 are cleaved as a signal peptide. A UPAR/Ly6 domain is found at Ile20–Val111. Cystine bridges form between Cys22-Cys47, Cys25-Cys33, and Cys39-Cys65. The N-linked (GlcNAc...) asparagine glycan is linked to Asn88. Cys92 and Cys97 are joined by a disulfide. Ser99 carries GPI-anchor amidated serine lipidation. Positions Ala100–His125 are cleaved as a propeptide — removed in mature form.

As to quaternary structure, monomer. In terms of processing, N-glycosylated. In terms of tissue distribution, highly expressed at the leading edges of cells, on filopodia.

It is found in the cell membrane. The protein is Lymphocyte antigen 6 complex locus protein G6c (LY6G6C) of Homo sapiens (Human).